A 603-amino-acid chain; its full sequence is Palladin (603 aa).

The segment at 63–67 is interaction with VASP; it reads FPPPP. Ser-133 is modified (phosphoserine). The tract at residues 134–156 is disordered; sequence PPTPAALLSPTKEPPPLLAKPKL. The residue at position 136 (Thr-136) is a Phosphothreonine. Ser-142, Ser-170, Ser-256, and Ser-261 each carry phosphoserine. An Ig-like C2-type 1 domain is found at 278–362; sequence PFFEMKLKHY…MAANTQGRVS (85 aa). Residues 373–402 form a disordered region; the sequence is NQRGRSPRSPPGHPHARRPRSRSRDSGDEN. A phosphoserine mark is found at Ser-378, Ser-381, and Ser-393. Ser-395 carries the post-translational modification Phosphoserine; by PKB/AKT1. Ser-398 bears the Phosphoserine mark. 2 consecutive Ig-like C2-type domains span residues 412 to 503 and 511 to 601; these read PHFL…LVVA and PVFI…ARLD. 2 interaction with EZR regions span residues 414 to 503 and 513 to 603; these read FLQA…LVVA and FIEK…LDVY. A disulfide bond links Cys-433 and Cys-485.

The protein belongs to the myotilin/palladin family. As to quaternary structure, interacts with EPS8. Interacts with LASP1. Interacts with VASP. Interacts with ACTN. Interacts with SORBS2. Interacts with PFN1. Interacts with LPP. Interacts with SPIN90. Interacts with SRC. Interacts with EZR. Interacts with RAI14. In terms of processing, phosphorylated predominantly on serines and, to a lesser extent, on tyrosines. Phosphorylation at Ser-395 by PKB/AKT1 modulates cytoskeletal organization and cell motility. In terms of tissue distribution, in adult central nervous system is detected in the brain and spinal cord, specially in the olfactory bulb, cerebral and cerebellar cortices, hippocampus, amygdala, superior colluculus, and superficial laminae of the spinal dorsal horn.

The protein localises to the cytoplasm. It localises to the cytoskeleton. Its subcellular location is the cell junction. It is found in the focal adhesion. The protein resides in the myofibril. The protein localises to the sarcomere. It localises to the z line. Its subcellular location is the cell projection. It is found in the ruffle. The protein resides in the podosome. The protein localises to the lamellipodium. It localises to the axon. Its subcellular location is the growth cone. Its function is as follows. Cytoskeletal protein required for organization of normal actin cytoskeleton. Roles in establishing cell morphology, motility, cell adhesion and cell-extracellular matrix interactions in a variety of cell types. May function as a scaffolding molecule with the potential to influence both actin polymerization and the assembly of existing actin filaments into higher-order arrays. Binds to proteins that bind to either monomeric or filamentous actin. Localizes at sites where active actin remodeling takes place, such as lamellipodia and membrane ruffles. Different isoforms may have functional differences. Plays a role in neurite outgrowth and in the establishment of polarity during neuronal morphogenesis. Participates in the acquisition of the reactive astrocyte morphology. This Rattus norvegicus (Rat) protein is Palladin (Palld).